Here is a 259-residue protein sequence, read N- to C-terminus: UPF0246 protein NMB0895 (259 aa).

The protein belongs to the UPF0246 family.

This Neisseria meningitidis serogroup B (strain ATCC BAA-335 / MC58) protein is UPF0246 protein NMB0895.